Reading from the N-terminus, the 79-residue chain is Small ribosomal subunit protein uS11 (79 aa).

Ser14 carries the post-translational modification Phosphoserine. Glycyl lysine isopeptide (Lys-Gly) (interchain with G-Cter in SUMO2) cross-links involve residues Lys59 and Lys61.

This sequence belongs to the universal ribosomal protein uS11 family. As to quaternary structure, component of the small ribosomal subunit. Part of the small subunit (SSU) processome, composed of more than 70 proteins and the RNA chaperone small nucleolar RNA (snoRNA) U3.

The protein localises to the cytoplasm. Its subcellular location is the nucleus. It is found in the nucleolus. Functionally, component of the small ribosomal subunit. The ribosome is a large ribonucleoprotein complex responsible for the synthesis of proteins in the cell. Part of the small subunit (SSU) processome, first precursor of the small eukaryotic ribosomal subunit. During the assembly of the SSU processome in the nucleolus, many ribosome biogenesis factors, an RNA chaperone and ribosomal proteins associate with the nascent pre-rRNA and work in concert to generate RNA folding, modifications, rearrangements and cleavage as well as targeted degradation of pre-ribosomal RNA by the RNA exosome. The sequence is that of Small ribosomal subunit protein uS11 (RPS14) from Sus scrofa (Pig).